Here is a 729-residue protein sequence, read N- to C-terminus: Fatty acid oxidation complex subunit alpha (729 aa).

Positions 1–189 (MLYKGDTLYL…KIGLVDGVVK (189 aa)) are enoyl-CoA hydratase/isomerase. Aspartate 296 lines the substrate pocket. The 3-hydroxyacyl-CoA dehydrogenase stretch occupies residues 311–729 (ETPKQAAVLG…ARPVGDLKTA (419 aa)). Residues methionine 324, aspartate 343, 400-402 (VVE), lysine 407, and serine 429 contribute to the NAD(+) site. Histidine 450 acts as the For 3-hydroxyacyl-CoA dehydrogenase activity in catalysis. Residue asparagine 453 coordinates NAD(+). Residues asparagine 500 and tyrosine 660 each coordinate substrate. Residues 708-729 (RHNEPYYPPVEPARPVGDLKTA) form a disordered region.

This sequence in the N-terminal section; belongs to the enoyl-CoA hydratase/isomerase family. In the C-terminal section; belongs to the 3-hydroxyacyl-CoA dehydrogenase family. In terms of assembly, heterotetramer of two alpha chains (FadB) and two beta chains (FadA).

It catalyses the reaction a (3S)-3-hydroxyacyl-CoA + NAD(+) = a 3-oxoacyl-CoA + NADH + H(+). The catalysed reaction is a (3S)-3-hydroxyacyl-CoA = a (2E)-enoyl-CoA + H2O. It carries out the reaction a 4-saturated-(3S)-3-hydroxyacyl-CoA = a (3E)-enoyl-CoA + H2O. The enzyme catalyses (3S)-3-hydroxybutanoyl-CoA = (3R)-3-hydroxybutanoyl-CoA. It catalyses the reaction a (3Z)-enoyl-CoA = a 4-saturated (2E)-enoyl-CoA. The catalysed reaction is a (3E)-enoyl-CoA = a 4-saturated (2E)-enoyl-CoA. Its pathway is lipid metabolism; fatty acid beta-oxidation. Involved in the aerobic and anaerobic degradation of long-chain fatty acids via beta-oxidation cycle. Catalyzes the formation of 3-oxoacyl-CoA from enoyl-CoA via L-3-hydroxyacyl-CoA. It can also use D-3-hydroxyacyl-CoA and cis-3-enoyl-CoA as substrate. The sequence is that of Fatty acid oxidation complex subunit alpha from Escherichia coli O7:K1 (strain IAI39 / ExPEC).